Consider the following 148-residue polypeptide: Deoxyuridine 5'-triphosphate nucleotidohydrolase (148 aa).

Residues 65 to 67, asparagine 78, 82 to 84, and lysine 92 contribute to the substrate site; these read RSG and TID.

Belongs to the dUTPase family. The cofactor is Mg(2+).

It carries out the reaction dUTP + H2O = dUMP + diphosphate + H(+). The protein operates within pyrimidine metabolism; dUMP biosynthesis; dUMP from dCTP (dUTP route): step 2/2. Its function is as follows. This enzyme is involved in nucleotide metabolism: it produces dUMP, the immediate precursor of thymidine nucleotides and it decreases the intracellular concentration of dUTP so that uracil cannot be incorporated into DNA. The chain is Deoxyuridine 5'-triphosphate nucleotidohydrolase from Chlorobium luteolum (strain DSM 273 / BCRC 81028 / 2530) (Pelodictyon luteolum).